Reading from the N-terminus, the 418-residue chain is L-rhamnose isomerase (418 aa).

Residues His-262, Asp-294, and Asp-296 each coordinate Mn(2+).

This sequence belongs to the rhamnose isomerase family. In terms of assembly, homotetramer. Requires Mn(2+) as cofactor.

It localises to the cytoplasm. It catalyses the reaction L-rhamnopyranose = L-rhamnulose. Its pathway is carbohydrate degradation; L-rhamnose degradation; glycerone phosphate from L-rhamnose: step 1/3. Catalyzes the interconversion of L-rhamnose and L-rhamnulose. The protein is L-rhamnose isomerase of Yersinia pseudotuberculosis serotype IB (strain PB1/+).